The sequence spans 273 residues: Dermonecrotic toxin LhSicTox-alphaIA1iii (273 aa).

Residue His5 is part of the active site. Mg(2+)-binding residues include Glu25 and Asp27. Residue His41 is the Nucleophile of the active site. Disulfide bonds link Cys45–Cys51 and Cys47–Cys190. Asp85 provides a ligand contact to Mg(2+).

Belongs to the arthropod phospholipase D family. Class II subfamily. Mg(2+) serves as cofactor. In terms of tissue distribution, expressed by the venom gland.

It is found in the secreted. The enzyme catalyses an N-(acyl)-sphingosylphosphocholine = an N-(acyl)-sphingosyl-1,3-cyclic phosphate + choline. It catalyses the reaction an N-(acyl)-sphingosylphosphoethanolamine = an N-(acyl)-sphingosyl-1,3-cyclic phosphate + ethanolamine. The catalysed reaction is a 1-acyl-sn-glycero-3-phosphocholine = a 1-acyl-sn-glycero-2,3-cyclic phosphate + choline. It carries out the reaction a 1-acyl-sn-glycero-3-phosphoethanolamine = a 1-acyl-sn-glycero-2,3-cyclic phosphate + ethanolamine. Its function is as follows. Dermonecrotic toxins cleave the phosphodiester linkage between the phosphate and headgroup of certain phospholipids (sphingolipid and lysolipid substrates), forming an alcohol (often choline) and a cyclic phosphate. This toxin acts on sphingomyelin (SM). It may also act on ceramide phosphoethanolamine (CPE), lysophosphatidylcholine (LPC) and lysophosphatidylethanolamine (LPE), but not on lysophosphatidylserine (LPS), and lysophosphatidylglycerol (LPG). It acts by transphosphatidylation, releasing exclusively cyclic phosphate products as second products. Induces dermonecrosis, hemolysis, increased vascular permeability, edema, inflammatory response, and platelet aggregation. The sequence is that of Dermonecrotic toxin LhSicTox-alphaIA1iii from Loxosceles hirsuta (Recluse spider).